The sequence spans 279 residues: Putative phosphoenolpyruvate synthase regulatory protein (279 aa).

Position 159 to 166 (Gly159 to Thr166) interacts with ADP.

Belongs to the pyruvate, phosphate/water dikinase regulatory protein family. PSRP subfamily.

The enzyme catalyses [pyruvate, water dikinase] + ADP = [pyruvate, water dikinase]-phosphate + AMP + H(+). The catalysed reaction is [pyruvate, water dikinase]-phosphate + phosphate + H(+) = [pyruvate, water dikinase] + diphosphate. Its function is as follows. Bifunctional serine/threonine kinase and phosphorylase involved in the regulation of the phosphoenolpyruvate synthase (PEPS) by catalyzing its phosphorylation/dephosphorylation. This Ralstonia nicotianae (strain ATCC BAA-1114 / GMI1000) (Ralstonia solanacearum) protein is Putative phosphoenolpyruvate synthase regulatory protein.